A 181-amino-acid chain; its full sequence is Cytidylate kinase (181 aa).

ATP is bound at residue 7–15 (GPPGSGTTS).

It belongs to the cytidylate kinase family. Type 2 subfamily.

The protein localises to the cytoplasm. It catalyses the reaction CMP + ATP = CDP + ADP. The catalysed reaction is dCMP + ATP = dCDP + ADP. The sequence is that of Cytidylate kinase from Methanoculleus marisnigri (strain ATCC 35101 / DSM 1498 / JR1).